Consider the following 156-residue polypeptide: Ribonuclease 1B pancreatic (156 aa).

Residues 1–28 form the signal peptide; sequence MALDKSVIPLPLLVVVLLVLGWAQPSLG. The substrate site is built by lysine 35 and arginine 38. The Proton acceptor role is filled by histidine 40. 4 cysteine pairs are disulfide-bonded: cysteine 54/cysteine 112, cysteine 68/cysteine 123, cysteine 86/cysteine 138, and cysteine 93/cysteine 100. Asparagine 62 is a glycosylation site (N-linked (GlcNAc...) asparagine). Substrate-binding positions include 69-73, lysine 94, and arginine 113; that span reads KSVNT. An N-linked (GlcNAc...) asparagine glycan is attached at asparagine 116. Catalysis depends on histidine 147, which acts as the Proton donor.

The protein belongs to the pancreatic ribonuclease family. In terms of assembly, monomer.

It is found in the secreted. The catalysed reaction is an [RNA] containing cytidine + H2O = an [RNA]-3'-cytidine-3'-phosphate + a 5'-hydroxy-ribonucleotide-3'-[RNA].. It catalyses the reaction an [RNA] containing uridine + H2O = an [RNA]-3'-uridine-3'-phosphate + a 5'-hydroxy-ribonucleotide-3'-[RNA].. In terms of biological role, endonuclease that catalyzes the cleavage of RNA on the 3' side of pyrimidine nucleotides. Compared to RNASE1 it has lost activity towards dsRNA. The protein is Ribonuclease 1B pancreatic (RNASE1B) of Pygathrix nemaeus (Red-shanked douc langur).